We begin with the raw amino-acid sequence, 607 residues long: Dolichyl-diphosphooligosaccharide--protein glycosyltransferase subunit 1 (607 aa).

Positions 1-23 (MEAPAAGLFLLLLLGTWAPAPGS) are cleaved as a signal peptide. Residues 24–438 (ASSEAPPLIN…TFNKVLMLQE (415 aa)) are Lumenal-facing. Position 187 is an N6-acetyllysine (K187). N299 is a glycosylation site (N-linked (GlcNAc...) asparagine). The helical transmembrane segment at 439–457 (PLLVVAAFYILFFTVIIYV) threads the bilayer. Residues 458-607 (RLDFSITKDP…TKIDHILDAL (150 aa)) are Cytoplasmic-facing. Residue K538 is modified to N6-acetyllysine; alternate. K538 is covalently cross-linked (Glycyl lysine isopeptide (Lys-Gly) (interchain with G-Cter in SUMO2); alternate).

The protein belongs to the OST1 family. As to quaternary structure, component of the oligosaccharyltransferase (OST) complex. OST exists in two different complex forms which contain common core subunits RPN1, RPN2, OST48, OST4, DAD1 and TMEM258, either STT3A or STT3B as catalytic subunits, and form-specific accessory subunits. STT3A complex assembly occurs through the formation of 3 subcomplexes. Subcomplex 1 contains RPN1 and TMEM258, subcomplex 2 contains the STT3A-specific subunits STT3A, DC2/OSTC, and KCP2 as well as the core subunit OST4, and subcomplex 3 contains RPN2, DAD1, and OST48. The STT3A complex can form stable complexes with the Sec61 complex or with both the Sec61 and TRAP complexes. Interacts with TMEM35A/NACHO. Ubiquitinated by the ECS(ASB11) complex. Ubiquitinated by RNF128, leading to degradation in a proteasome/lysosome-dependent manner. In terms of processing, ufmylated by UFL1 in response to endoplasmic reticulum stress, promoting reticulophagy of endoplasmic reticulum sheets. In terms of tissue distribution, expressed in all tissues tested.

Its subcellular location is the endoplasmic reticulum membrane. The protein localises to the melanosome. It participates in protein modification; protein glycosylation. In terms of biological role, subunit of the oligosaccharyl transferase (OST) complex that catalyzes the initial transfer of a defined glycan (Glc(3)Man(9)GlcNAc(2) in eukaryotes) from the lipid carrier dolichol-pyrophosphate to an asparagine residue within an Asn-X-Ser/Thr consensus motif in nascent polypeptide chains, the first step in protein N-glycosylation. N-glycosylation occurs cotranslationally and the complex associates with the Sec61 complex at the channel-forming translocon complex that mediates protein translocation across the endoplasmic reticulum (ER). All subunits are required for a maximal enzyme activity. The protein is Dolichyl-diphosphooligosaccharide--protein glycosyltransferase subunit 1 of Homo sapiens (Human).